Reading from the N-terminus, the 341-residue chain is UDP-3-O-acylglucosamine N-acyltransferase 2 (341 aa).

The active-site Proton acceptor is the His254.

It belongs to the transferase hexapeptide repeat family. LpxD subfamily. As to quaternary structure, homotrimer.

The catalysed reaction is a UDP-3-O-[(3R)-3-hydroxyacyl]-alpha-D-glucosamine + a (3R)-hydroxyacyl-[ACP] = a UDP-2-N,3-O-bis[(3R)-3-hydroxyacyl]-alpha-D-glucosamine + holo-[ACP] + H(+). Its pathway is bacterial outer membrane biogenesis; LPS lipid A biosynthesis. Functionally, catalyzes the N-acylation of UDP-3-O-acylglucosamine using 3-hydroxyacyl-ACP as the acyl donor. Is involved in the biosynthesis of lipid A, a phosphorylated glycolipid that anchors the lipopolysaccharide to the outer membrane of the cell. This chain is UDP-3-O-acylglucosamine N-acyltransferase 2, found in Nitrobacter winogradskyi (strain ATCC 25391 / DSM 10237 / CIP 104748 / NCIMB 11846 / Nb-255).